The sequence spans 493 residues: Uridine 5'-monophosphate synthase (493 aa).

Positions 1–207 are OPRTase; it reads MVAQNSDKMR…VAKYIAAVQI (207 aa). Residues 208 to 233 are domain linker; that stretch reads NSDGTFVGGDKGDVVRANDLQRTKLT. Positions 234 to 493 are OMPdecase; sequence YENRANLAKS…WAAYQDRVAK (260 aa). K320 is a catalytic residue.

It in the N-terminal section; belongs to the purine/pyrimidine phosphoribosyltransferase family. The protein in the C-terminal section; belongs to the OMP decarboxylase family.

It carries out the reaction orotidine 5'-phosphate + diphosphate = orotate + 5-phospho-alpha-D-ribose 1-diphosphate. The enzyme catalyses orotidine 5'-phosphate + H(+) = UMP + CO2. The protein operates within pyrimidine metabolism; UMP biosynthesis via de novo pathway; UMP from orotate: step 1/2. Its pathway is pyrimidine metabolism; UMP biosynthesis via de novo pathway; UMP from orotate: step 2/2. The polypeptide is Uridine 5'-monophosphate synthase (r-l) (Drosophila melanogaster (Fruit fly)).